The chain runs to 511 residues: Maturase K (511 aa).

This sequence belongs to the intron maturase 2 family. MatK subfamily.

It localises to the plastid. Its subcellular location is the chloroplast. Functionally, usually encoded in the trnK tRNA gene intron. Probably assists in splicing its own and other chloroplast group II introns. The polypeptide is Maturase K (Hordeum vulgare subsp. spontaneum (Wild barley)).